We begin with the raw amino-acid sequence, 76 residues long: Exodeoxyribonuclease 7 small subunit (76 aa).

This sequence belongs to the XseB family. In terms of assembly, heterooligomer composed of large and small subunits.

The protein resides in the cytoplasm. The catalysed reaction is Exonucleolytic cleavage in either 5'- to 3'- or 3'- to 5'-direction to yield nucleoside 5'-phosphates.. Functionally, bidirectionally degrades single-stranded DNA into large acid-insoluble oligonucleotides, which are then degraded further into small acid-soluble oligonucleotides. This Lactiplantibacillus plantarum (strain ATCC BAA-793 / NCIMB 8826 / WCFS1) (Lactobacillus plantarum) protein is Exodeoxyribonuclease 7 small subunit.